The chain runs to 159 residues: 3-hydroxyacyl-[acyl-carrier-protein] dehydratase FabZ (159 aa).

H59 is a catalytic residue.

It belongs to the thioester dehydratase family. FabZ subfamily.

The protein resides in the cytoplasm. The catalysed reaction is a (3R)-hydroxyacyl-[ACP] = a (2E)-enoyl-[ACP] + H2O. Its function is as follows. Involved in unsaturated fatty acids biosynthesis. Catalyzes the dehydration of short chain beta-hydroxyacyl-ACPs and long chain saturated and unsaturated beta-hydroxyacyl-ACPs. This Caulobacter vibrioides (strain ATCC 19089 / CIP 103742 / CB 15) (Caulobacter crescentus) protein is 3-hydroxyacyl-[acyl-carrier-protein] dehydratase FabZ.